The sequence spans 209 residues: Probable E3 ubiquitin-protein ligase NleG7 (209 aa).

Belongs to the NleG E3 ligase family. Post-translationally, two sizes of protein are detected in situ; only the smaller protein is secreted.

It is found in the secreted. The protein localises to the host cytoplasm. It carries out the reaction S-ubiquitinyl-[E2 ubiquitin-conjugating enzyme]-L-cysteine + [acceptor protein]-L-lysine = [E2 ubiquitin-conjugating enzyme]-L-cysteine + N(6)-ubiquitinyl-[acceptor protein]-L-lysine.. Effector proteins function to alter host cell physiology and promote bacterial survival in host tissues. This protein is probably an E3 ubiquitin-protein ligase that interferes with the host's ubiquitination pathway and targets host proteins for proteasomal degradation. Mice infected with a strain of bacteria deleted for this gene were colonized less quickly by bacteria. The sequence is that of Probable E3 ubiquitin-protein ligase NleG7 from Citrobacter rodentium.